The primary structure comprises 236 residues: CD81 antigen (236 aa).

Residues 1-12 (MGVEGCTKCIKY) are Cytoplasmic-facing. A helical transmembrane segment spans residues 13–33 (LLFVFNFVFWLAGGVILGVAL). Over 34-63 (WLRHDPQTTSLLYLELGNKPAPNTFYVGIY) the chain is Extracellular. Residues 64 to 84 (ILIAVGAVMMFVGFLGCYGAI) traverse the membrane as a helical segment. At 85–89 (QESQC) the chain is on the cytoplasmic side. A helical membrane pass occupies residues 90-112 (LLGTFFTCLVILFACEVAAGIWG). At 113–201 (FVNKDQIAKD…QKIDELFSGK (89 aa)) the chain is on the extracellular side. Intrachain disulfides connect cysteine 156–cysteine 190 and cysteine 157–cysteine 175. Residues 202-224 (LYLIGIAAIVVAVIMIFEMILSM) traverse the membrane as a helical segment. Residue glutamate 219 participates in cholesterol binding. Topologically, residues 225-236 (VLCCGIRNSSVY) are cytoplasmic.

Belongs to the tetraspanin (TM4SF) family. In terms of assembly, homodimer. Part of a complex composed of CD19, CR2/CD21, CD81 and IFITM1/CD225 in the membrane of mature B cells. Interacts (via the second extracellular domain) with CD19; this interaction is initiated early during biosynthesis in the ER and enables trafficking of only properly folded CD19. Part of a complex that includes MHC class II/HLA-DR molecules and IFITM1. Interacts with IFITM1. Interacts with IFITM2 and IFITM3. Part of integrin-tetraspanin complex composed of CD9, CD81, beta-1 and beta-2 integrins in the membrane of monocyte/macrophages. Interacts (via the second extracellular domain) with integrin ITGAV:ITGB3. Interacts with CD247/CD3 zeta, ICAM1 and CD9 at the immune synapse on T cell membrane. Part of a GPCR-tetraspanin complex consisting at least of ADGRG1, CD81, possibly CD9, and GNA11 in which CD81 enhances the association of ADGRG1 with GNA11. Part of a complex composed of CD9, CD81, PTGFRN and IGSF8. Interacts directly with IGSF8. Interacts with CD53 and SCIMP. Interacts with SAMHD1 (via its C-terminus). Interacts with glypican GPC3 and with the transcriptional repressor HHEX; binding to GPC3 decreases the availability of free CD81 for binding to HHEX, resulting in nuclear translocation of HHEX and transcriptional repression. Interacts with CLDN1. Interacts with CLDN6 and CLDN9. Not glycosylated. Post-translationally, likely constitutively palmitoylated at low levels. Protein palmitoylation is up-regulated upon coligation of BCR and CD9-C2R-CD81 complexes in lipid rafts. As to expression, expressed in oocytes (at protein level). Highly expressed in granulosa cells. Expressed in skeletal muscle mainly in endothelial cells of endomysial capillaries, in satellite cells and myoblasts (at protein level). Expressed in hepatocytes (at protein level).

It localises to the cell membrane. The protein localises to the basolateral cell membrane. Its function is as follows. Structural component of specialized membrane microdomains known as tetraspanin-enriched microdomains (TERMs), which act as platforms for receptor clustering and signaling. Essential for trafficking and compartmentalization of CD19 receptor on the cell surface of activated B cells. Upon initial encounter with a microbial pathogen, enables the assembly of CD19-CR2 and B cell receptor complexes at signaling TERMs, lowering the threshold dose of antigen required to trigger B cell clonal expansion and humoral immune response. In T cells, associates with CD4 or CD8 coreceptors and defines the maturation state of antigen-induced synapses with B cells. Facilitates localization of CD3 in these immune synapses, required for costimulation and sustained activation of T cells, preferentially triggering T helper type 2 immune response. Can act both as positive and negative regulator of homotypic or heterotypic cell-cell fusion processes. In myoblasts, associates with another tetraspanin CD9 in complex with PTGFRN and inhibits myotube fusion during muscle regeneration. In macrophages, associates with CD9 and beta-1 and beta-2 integrins, and prevents macrophage fusion into multinucleated giant cells specialized in ingesting complement-opsonized large particles. Also prevents the fusion between mononuclear cell progenitors into osteoclasts in charge of bone resorption. Positively regulates sperm-egg fusion and may be involved in the acrosome reaction. Regulates protein trafficking in intracellular compartments. In T cells, associates with dNTPase SAMHD1 and defines its subcellular location, enabling its degradation by the proteasome and thereby controlling intracellular dNTP levels. Also regulates integrin-dependent migration of macrophages, particularly relevant for inflammatory response in the lung. In terms of biological role, (Microbial infection) Specifically required for Plasmodium yoelii infectivity of hepatocytes, controlling sporozoite entry in hepatocytes via the parasitophorous vacuole and subsequent parasite differentiation to exoerythrocytic forms. This is CD81 antigen from Mus musculus (Mouse).